A 224-amino-acid chain; its full sequence is Heme response regulator HssR (224 aa).

In terms of domain architecture, Response regulatory spans Q3–L116. D52 bears the 4-aspartylphosphate mark. The segment at residues N124 to N222 is a DNA-binding region (ompR/PhoB-type).

In terms of processing, phosphorylated by HssS.

The protein localises to the cytoplasm. Functionally, member of the two-component regulatory system HssS/HssR involved in intracellular heme homeostasis and tempering of staphylococcal virulence. Phosphorylated HssR binds to a direct repeat sequence within hrtAB promoter and activates the expression of hrtAB, an efflux pump, in response to extracellular heme, hemin, hemoglobin or blood. In Staphylococcus aureus (strain Mu50 / ATCC 700699), this protein is Heme response regulator HssR (hssR).